The following is an 81-amino-acid chain: Exodeoxyribonuclease 7 small subunit (81 aa).

Belongs to the XseB family. As to quaternary structure, heterooligomer composed of large and small subunits.

It localises to the cytoplasm. The catalysed reaction is Exonucleolytic cleavage in either 5'- to 3'- or 3'- to 5'-direction to yield nucleoside 5'-phosphates.. In terms of biological role, bidirectionally degrades single-stranded DNA into large acid-insoluble oligonucleotides, which are then degraded further into small acid-soluble oligonucleotides. This chain is Exodeoxyribonuclease 7 small subunit, found in Pasteurella multocida (strain Pm70).